A 451-amino-acid polypeptide reads, in one-letter code: Phosphoglucosamine mutase (451 aa).

The active-site Phosphoserine intermediate is Ser-107. Positions 107, 246, 248, and 250 each coordinate Mg(2+). Ser-107 bears the Phosphoserine mark.

It belongs to the phosphohexose mutase family. Requires Mg(2+) as cofactor. Activated by phosphorylation.

It carries out the reaction alpha-D-glucosamine 1-phosphate = D-glucosamine 6-phosphate. Catalyzes the conversion of glucosamine-6-phosphate to glucosamine-1-phosphate. The protein is Phosphoglucosamine mutase of Burkholderia lata (strain ATCC 17760 / DSM 23089 / LMG 22485 / NCIMB 9086 / R18194 / 383).